A 172-amino-acid chain; its full sequence is DNA-directed RNA polymerase II subunit RPB7 (172 aa).

Belongs to the eukaryotic RPB7/RPC8 RNA polymerase subunit family. As to quaternary structure, component of the RNA polymerase II (Pol II) core complex consisting of 12 subunits: a ten-subunit catalytic core composed of POLR2A/RPB1, POLR2B/RPB2, POLR2C/RPB3, POLR2I/RPB9, POLR2J/RPB11, POLR2E/RPABC1, POLR2F/RPABC2, POLR2H/RPABC3, POLR2K/RPABC4 and POLR2L/RPABC5 and a mobile stalk composed of two subunits POLR2D/RPB4 and POLR2G/RPB7, protruding from the core and functioning primarily in transcription initiation. Part of Pol II(G) complex, in which Pol II core associates with an additional subunit POLR2M; unlike conventional Pol II, Pol II(G) functions as a transcriptional repressor. Part of TBP-based Pol II pre-initiation complex (PIC), in which Pol II core assembles with general transcription factors and other specific initiation factors including GTF2E1, GTF2E2, GTF2F1, GTF2F2, TCEA1, ERCC2, ERCC3, GTF2H2, GTF2H3, GTF2H4, GTF2H5, GTF2A1, GTF2A2, GTF2B and TBP; this large multi-subunit PIC complex mediates DNA unwinding and targets Pol II core to the transcription start site where the first phosphodiester bond forms.

It is found in the nucleus. Its function is as follows. Core component of RNA polymerase II (Pol II), a DNA-dependent RNA polymerase which synthesizes mRNA precursors and many functional non-coding RNAs using the four ribonucleoside triphosphates as substrates. Pol II is the central component of the basal RNA polymerase II transcription machinery. It is composed of mobile elements that move relative to each other. POLR2G/RPB7 is part of a subcomplex with POLR2D/RPB4 that binds to a pocket formed by POLR2A/RPB1, POLR2B/RPB2 and POLR2F/RPABC2 at the base of the clamp element. The POLR2D/RPB4-POLR2G/RPB7 subcomplex seems to lock the clamp via POLR2G/RPB7 in the closed conformation thus preventing double-stranded DNA to enter the active site cleft. The POLR2D/RPB4-POLR2G/RPB7 subcomplex binds single-stranded DNA and RNA. The chain is DNA-directed RNA polymerase II subunit RPB7 (POLR2G) from Bos taurus (Bovine).